Reading from the N-terminus, the 105-residue chain is Pyruvate synthase subunit PorD (105 aa).

2 consecutive 4Fe-4S ferredoxin-type domains span residues 44 to 73 (FRPEFKKDKCVRCFLCYIYCPEPAIYLDEE) and 74 to 103 (GYPVFDYDYCKGCGICANECPTNAIEMVRE). The [4Fe-4S] cluster site is built by Cys53, Cys56, Cys59, Cys63, Cys83, Cys86, Cys89, and Cys93.

In terms of assembly, heterotetramer of one alpha, one beta, one delta and one gamma chain. It depends on [4Fe-4S] cluster as a cofactor.

The sequence is that of Pyruvate synthase subunit PorD (porD) from Pyrococcus abyssi (strain GE5 / Orsay).